The chain runs to 37 residues: Delta-amaurobitoxin-Pl1a (37 aa).

Disulfide bonds link Cys-2-Cys-18, Cys-9-Cys-23, Cys-17-Cys-33, and Cys-25-Cys-31. Serine amide is present on Ser-37.

This sequence belongs to the neurotoxin 07 (Beta/delta-agtx) family. 02 (aga-3) subfamily. Expressed by the venom gland.

The protein localises to the secreted. Binds at site 4 of sodium channels (Nav) and inhibits the fast inactivation of cockroach channels. This toxin is active only on insects. Has a potent activity against S.litura larvae. The chain is Delta-amaurobitoxin-Pl1a from Pireneitega luctuosa (Tangled nest spider).